The following is a 194-amino-acid chain: Cilia- and flagella-associated protein 107 (194 aa).

Mn stretches follow at residues 45–60 and 95–107; these read TPQS…FPDH and ISTY…RHGY.

In terms of assembly, microtubule inner protein component of sperm flagellar doublet microtubules. In terms of tissue distribution, expressed in airway epithelial cells.

The protein resides in the cytoplasm. The protein localises to the cytoskeleton. It localises to the cilium axoneme. Its subcellular location is the flagellum axoneme. In terms of biological role, microtubule inner protein (MIP) part of the dynein-decorated doublet microtubules (DMTs) in cilia axoneme, which is required for motile cilia beating. The protein is Cilia- and flagella-associated protein 107 of Homo sapiens (Human).